A 573-amino-acid polypeptide reads, in one-letter code: Phosphoenolpyruvate-protein phosphotransferase (573 aa).

The active-site Tele-phosphohistidine intermediate is the histidine 190. Phosphoenolpyruvate is bound by residues arginine 297 and arginine 333. Positions 432 and 456 each coordinate Mg(2+). Phosphoenolpyruvate contacts are provided by residues 455 to 456 (ND) and arginine 466. The active-site Proton donor is cysteine 503.

Belongs to the PEP-utilizing enzyme family. As to quaternary structure, homodimer. Mg(2+) is required as a cofactor.

Its subcellular location is the cytoplasm. It carries out the reaction L-histidyl-[protein] + phosphoenolpyruvate = N(pros)-phospho-L-histidyl-[protein] + pyruvate. General (non sugar-specific) component of the phosphoenolpyruvate-dependent sugar phosphotransferase system (sugar PTS). This major carbohydrate active-transport system catalyzes the phosphorylation of incoming sugar substrates concomitantly with their translocation across the cell membrane. Enzyme I transfers the phosphoryl group from phosphoenolpyruvate (PEP) to the phosphoryl carrier protein (HPr). This is Phosphoenolpyruvate-protein phosphotransferase (ptsI) from Priestia megaterium (Bacillus megaterium).